Here is a 96-residue protein sequence, read N- to C-terminus: Early E1A 11 kDa protein (96 aa).

Disordered regions lie at residues 1 to 29 (MNSRMRRWAATSRLLHEDPPATPPSQDQQ) and 72 to 96 (LAQGEEEEEEEDGAEDIEENGEESD). The segment covering 75 to 96 (GEEEEEEEDGAEDIEENGEESD) has biased composition (acidic residues).

The sequence is that of Early E1A 11 kDa protein from Murine adenovirus A serotype 1 (MAdV-1).